The sequence spans 69 residues: Small cysteine-rich protein (69 aa).

The first 19 residues, 1–19, serve as a signal peptide directing secretion; that stretch reads MKLQLCLVLLLLGVLYVQS. A propeptide spanning residues 20–22 is cleaved from the precursor; the sequence is VPE.

It belongs to the Cnidaria small cysteine-rich protein (SCRiP) family. delta subfamily. Contains 4 disulfide bonds.

It is found in the secreted. Its subcellular location is the nematocyst. In terms of biological role, induces neurotoxic symptoms on zebrafish. Has also been claimed to be implied in calcification, but this function seems improbable. The polypeptide is Small cysteine-rich protein (Metridium senile (Brown sea anemone)).